A 269-amino-acid chain; its full sequence is MPELPEVEAIRRGIEPHLVGATILHAVVRNGRLRWPVSEEIYRLSDQPVLSVQRRAKYLLLELPEGWIIIHLGMSGSLRILPEELPPEKHDHVDLVMSNGKVLRYTDPRRFGAWLWTKELEGHNVLAHLGPEPLSDDFNGEYLHQKCAKKKTAIKPWLMDNKLVVGVGNIYASESLFAAGIHPDRLASSLSLAECELLARVIKAVLLRSIEQGGTTLKDFLQSDGKPGYFAQELQVYGRKGEPCRVCGTPIVATKHAQRATFYCRQCQK.

The active-site Schiff-base intermediate with DNA is Pro-2. The Proton donor role is filled by Glu-3. Lys-57 acts as the Proton donor; for beta-elimination activity in catalysis. 3 residues coordinate DNA: His-90, Arg-109, and Lys-150. Residues 235–269 (QVYGRKGEPCRVCGTPIVATKHAQRATFYCRQCQK) form an FPG-type zinc finger. Catalysis depends on Arg-259, which acts as the Proton donor; for delta-elimination activity.

It belongs to the FPG family. As to quaternary structure, monomer. The cofactor is Zn(2+).

The catalysed reaction is Hydrolysis of DNA containing ring-opened 7-methylguanine residues, releasing 2,6-diamino-4-hydroxy-5-(N-methyl)formamidopyrimidine.. The enzyme catalyses 2'-deoxyribonucleotide-(2'-deoxyribose 5'-phosphate)-2'-deoxyribonucleotide-DNA = a 3'-end 2'-deoxyribonucleotide-(2,3-dehydro-2,3-deoxyribose 5'-phosphate)-DNA + a 5'-end 5'-phospho-2'-deoxyribonucleoside-DNA + H(+). Functionally, involved in base excision repair of DNA damaged by oxidation or by mutagenic agents. Acts as a DNA glycosylase that recognizes and removes damaged bases. Has a preference for oxidized purines, such as 7,8-dihydro-8-oxoguanine (8-oxoG). Has AP (apurinic/apyrimidinic) lyase activity and introduces nicks in the DNA strand. Cleaves the DNA backbone by beta-delta elimination to generate a single-strand break at the site of the removed base with both 3'- and 5'-phosphates. The chain is Formamidopyrimidine-DNA glycosylase from Escherichia coli O6:K15:H31 (strain 536 / UPEC).